The following is a 57-amino-acid chain: DNA-directed RNA polymerase subunit Rpo6 (57 aa).

Belongs to the archaeal Rpo6/eukaryotic RPB6 RNA polymerase subunit family. As to quaternary structure, part of the RNA polymerase complex.

The protein resides in the cytoplasm. It is found in the chromosome. It catalyses the reaction RNA(n) + a ribonucleoside 5'-triphosphate = RNA(n+1) + diphosphate. Functionally, DNA-dependent RNA polymerase (RNAP) catalyzes the transcription of DNA into RNA using the four ribonucleoside triphosphates as substrates. This Thermococcus kodakarensis (strain ATCC BAA-918 / JCM 12380 / KOD1) (Pyrococcus kodakaraensis (strain KOD1)) protein is DNA-directed RNA polymerase subunit Rpo6.